The chain runs to 603 residues: Mitochondrial distribution and morphology protein 34 (603 aa).

The 205-residue stretch at 1–205 folds into the SMP-LTD domain; sequence MAFNFNWSPL…SPEYQEIETE (205 aa). Over residues 320–332 the composition is skewed to low complexity; sequence KSGASSVASGSTG. Disordered regions lie at residues 320 to 511 and 558 to 603; these read KSGA…PLLR and IARK…AYVA. Polar residues predominate over residues 333-351; that stretch reads NETLSSRPTLASSYSTSAG. Positions 371 to 380 are enriched in basic and acidic residues; that stretch reads VVDLRRKDGA. Positions 383 to 403 are enriched in polar residues; that stretch reads GVSTEANTPLPSTQVSDTSSV. Residues 452–463 show a composition bias toward low complexity; that stretch reads PLLAPAPLIPNA. Over residues 500–509 the composition is skewed to polar residues; sequence RQAQQSTSPL. Over residues 558-570 the composition is skewed to basic and acidic residues; the sequence is IARKVQEEKDKSS.

It belongs to the MDM34 family. As to quaternary structure, component of the ER-mitochondria encounter structure (ERMES) or MDM complex, composed of mmm1, mdm10, mdm12 and mdm34.

It is found in the mitochondrion outer membrane. Component of the ERMES/MDM complex, which serves as a molecular tether to connect the endoplasmic reticulum (ER) and mitochondria. Components of this complex are involved in the control of mitochondrial shape and protein biogenesis, and function in nonvesicular lipid trafficking between the ER and mitochondria. Mdm34 is required for the interaction of the ER-resident membrane protein mmm1 and the outer mitochondrial membrane-resident beta-barrel protein mdm10. The polypeptide is Mitochondrial distribution and morphology protein 34 (Pyrenophora tritici-repentis (strain Pt-1C-BFP) (Wheat tan spot fungus)).